We begin with the raw amino-acid sequence, 298 residues long: MDLLGPMEMTEGSLCSFTAADDFYDDPCFNTSDMHFFEDLDPRLVHVGGLLKPEEHPHTRAPPREPTEEEHVRAPSGHHQAGRCLLWACKACKRKTTNADRRKAATMRERRRLSKVNEAFETLKRCTSTNPNQRLPKVEILRNAIRYIESLQALLREQEDAYYPVLEHYSGESDASSPRSNCSDGMMEYSGPPCSSRRRNSYDSSYYTESPNDPKHGKSSVVSSLDCLSSIVERISTDNSTCPILPPAEAVAEGSPCSPQEGGNLSDSGAQIPSPTNCTPLPQESSSSSSSNPIYQVL.

Positions 53 to 73 are enriched in basic and acidic residues; the sequence is PEEHPHTRAPPREPTEEEHVR. The tract at residues 53–77 is disordered; sequence PEEHPHTRAPPREPTEEEHVRAPSG. A bHLH domain is found at 100-151; that stretch reads DRRKAATMRERRRLSKVNEAFETLKRCTSTNPNQRLPKVEILRNAIRYIESL. Disordered regions lie at residues 170-220 and 242-298; these read SGES…GKSS and CPIL…YQVL. Composition is skewed to polar residues over residues 173 to 183 and 257 to 284; these read SDASSPRSNCS and CSPQEGGNLSDSGAQIPSPTNCTPLPQE.

In terms of assembly, efficient DNA binding requires dimerization with another bHLH protein. Seems to form active heterodimers with ITF-2.

It localises to the nucleus. Its function is as follows. Acts as a transcriptional activator that promotes transcription of muscle-specific target genes and plays a role in muscle differentiation. Induces fibroblasts to differentiate into myoblasts. Interacts with and is inhibited by the twist protein. This interaction probably involves the basic domains of both proteins. In Gallus gallus (Chicken), this protein is Myoblast determination protein 1 homolog (MYOD1).